The following is a 529-amino-acid chain: Glucose-6-phosphate isomerase (529 aa).

Glu322 acts as the Proton donor in catalysis. Catalysis depends on residues His351 and Lys455.

The protein belongs to the GPI family.

The protein resides in the cytoplasm. It catalyses the reaction alpha-D-glucose 6-phosphate = beta-D-fructose 6-phosphate. The protein operates within carbohydrate biosynthesis; gluconeogenesis. It participates in carbohydrate degradation; glycolysis; D-glyceraldehyde 3-phosphate and glycerone phosphate from D-glucose: step 2/4. Functionally, catalyzes the reversible isomerization of glucose-6-phosphate to fructose-6-phosphate. This chain is Glucose-6-phosphate isomerase, found in Acaryochloris marina (strain MBIC 11017).